The chain runs to 441 residues: Dolichyl-diphosphooligosaccharide--protein glycosyltransferase 48 kDa subunit (441 aa).

The signal sequence occupies residues 1–28 (MATALSGGFSKNALFILSAALMLQAVLG). The Lumenal portion of the chain corresponds to 29–410 (DGKTLVLLDN…TQYERFIPSA (382 aa)). Residues 411–431 (FPYYASAFSMMAGLFVFSVVF) form a helical membrane-spanning segment. Residues 432 to 441 (LHMREKEKSD) are Cytoplasmic-facing.

The protein belongs to the DDOST 48 kDa subunit family. Component of the oligosaccharyltransferase (OST) complex.

It is found in the endoplasmic reticulum membrane. Its pathway is protein modification; protein glycosylation. Subunit of the oligosaccharyl transferase (OST) complex that catalyzes the initial transfer of a defined glycan (Glc(3)Man(9)GlcNAc(2) in eukaryotes) from the lipid carrier dolichol-pyrophosphate to an asparagine residue within an Asn-X-Ser/Thr consensus motif in nascent polypeptide chains, the first step in protein N-glycosylation. N-glycosylation occurs cotranslationally and the complex associates with the Sec61 complex at the channel-forming translocon complex that mediates protein translocation across the endoplasmic reticulum (ER). All subunits are required for a maximal enzyme activity. Required for the assembly of both SST3A- and SS3B-containing OST complexes. The protein is Dolichyl-diphosphooligosaccharide--protein glycosyltransferase 48 kDa subunit of Danio rerio (Zebrafish).